Here is a 487-residue protein sequence, read N- to C-terminus: Betaine aldehyde dehydrogenase (487 aa).

Residues Ser26 and Asp93 each contribute to the K(+) site. Position 150 to 152 (150 to 152 (GAW)) interacts with NAD(+). Residue Lys162 is the Charge relay system of the active site. Residues 176–179 (KPSE) and 229–232 (SVPT) each bind NAD(+). Leu244 is a binding site for K(+). Residue Glu250 is the Proton acceptor of the active site. NAD(+) contacts are provided by Gly252, Cys284, and Glu384. The active-site Nucleophile is the Cys284. Residue Cys284 is modified to Cysteine sulfenic acid (-SOH). K(+) is bound by residues Lys454 and Gly457. The Charge relay system role is filled by Glu461.

Belongs to the aldehyde dehydrogenase family. In terms of assembly, dimer of dimers. Requires K(+) as cofactor.

It catalyses the reaction betaine aldehyde + NAD(+) + H2O = glycine betaine + NADH + 2 H(+). Its pathway is amine and polyamine biosynthesis; betaine biosynthesis via choline pathway; betaine from betaine aldehyde: step 1/1. Involved in the biosynthesis of the osmoprotectant glycine betaine. Catalyzes the irreversible oxidation of betaine aldehyde to the corresponding acid. The polypeptide is Betaine aldehyde dehydrogenase (Rhizobium leguminosarum bv. trifolii (strain WSM2304)).